The sequence spans 350 residues: Lipoyl synthase (350 aa).

A disordered region spans residues 1–39 (MSDTSSPKPVASGEKFRTAQGITAIKDGQKRRASAEPQV). The [4Fe-4S] cluster site is built by cysteine 73, cysteine 78, cysteine 84, cysteine 99, cysteine 103, cysteine 106, and serine 314. Positions 85 to 303 (WSNGTATIML…RDIGLEKGFM (219 aa)) constitute a Radical SAM core domain.

It belongs to the radical SAM superfamily. Lipoyl synthase family. The cofactor is [4Fe-4S] cluster.

Its subcellular location is the cytoplasm. It carries out the reaction [[Fe-S] cluster scaffold protein carrying a second [4Fe-4S](2+) cluster] + N(6)-octanoyl-L-lysyl-[protein] + 2 oxidized [2Fe-2S]-[ferredoxin] + 2 S-adenosyl-L-methionine + 4 H(+) = [[Fe-S] cluster scaffold protein] + N(6)-[(R)-dihydrolipoyl]-L-lysyl-[protein] + 4 Fe(3+) + 2 hydrogen sulfide + 2 5'-deoxyadenosine + 2 L-methionine + 2 reduced [2Fe-2S]-[ferredoxin]. It functions in the pathway protein modification; protein lipoylation via endogenous pathway; protein N(6)-(lipoyl)lysine from octanoyl-[acyl-carrier-protein]: step 2/2. Catalyzes the radical-mediated insertion of two sulfur atoms into the C-6 and C-8 positions of the octanoyl moiety bound to the lipoyl domains of lipoate-dependent enzymes, thereby converting the octanoylated domains into lipoylated derivatives. The sequence is that of Lipoyl synthase from Ectopseudomonas mendocina (strain ymp) (Pseudomonas mendocina).